The chain runs to 603 residues: uncharacterized protein (603 aa).

The 76-residue stretch at 4-79 (YRIRVTTVDQ…VTFHLVIAVF (76 aa)) folds into the Ubiquitin-like domain. 3 disordered regions span residues 85-121 (TLPS…PEEL), 159-178 (SLPT…NSVS), and 206-348 (AQES…NQPF). Polar residues-rich tracts occupy residues 94-117 (VPQS…TSLN) and 162-178 (THEQ…NSVS). Positions 219 to 231 (SSSSAPLASDQSP) are enriched in low complexity. Polar residues predominate over residues 246-264 (LGSNSGLNPRSPNSFSSPL). Low complexity predominate over residues 280–289 (SLSPLSNSSS). Residues 290–314 (INQVHQNETHGSTISVPNPNLSQMG) are compositionally biased toward polar residues. A compositionally biased stretch (low complexity) spans 315–329 (PSHSSSVPSNLSPNP). Polar residues predominate over residues 330 to 348 (AQNENPSTTSIPSINNQPF). A helical membrane pass occupies residues 496–516 (ILLTSIMSVVFLLQTGALAPF). The disordered stretch occupies residues 544–578 (TAQRVVEIPNETQTEDEQDGTNTPDNRADAEEREL). Residue threonine 566 is modified to Phosphothreonine. Basic and acidic residues predominate over residues 569 to 578 (NRADAEEREL).

It is found in the endoplasmic reticulum membrane. This is an uncharacterized protein from Schizosaccharomyces pombe (strain 972 / ATCC 24843) (Fission yeast).